The following is a 158-amino-acid chain: NAD(P)H-quinone oxidoreductase subunit N (158 aa).

It belongs to the complex I NdhN subunit family. As to quaternary structure, NDH-1 can be composed of about 15 different subunits; different subcomplexes with different compositions have been identified which probably have different functions.

The protein resides in the cellular thylakoid membrane. It carries out the reaction a plastoquinone + NADH + (n+1) H(+)(in) = a plastoquinol + NAD(+) + n H(+)(out). The catalysed reaction is a plastoquinone + NADPH + (n+1) H(+)(in) = a plastoquinol + NADP(+) + n H(+)(out). Its function is as follows. NDH-1 shuttles electrons from an unknown electron donor, via FMN and iron-sulfur (Fe-S) centers, to quinones in the respiratory and/or the photosynthetic chain. The immediate electron acceptor for the enzyme in this species is believed to be plastoquinone. Couples the redox reaction to proton translocation, and thus conserves the redox energy in a proton gradient. Cyanobacterial NDH-1 also plays a role in inorganic carbon-concentration. In Rippkaea orientalis (strain PCC 8801 / RF-1) (Cyanothece sp. (strain PCC 8801)), this protein is NAD(P)H-quinone oxidoreductase subunit N.